The primary structure comprises 144 residues: Large ribosomal subunit protein uL11 (144 aa).

This sequence belongs to the universal ribosomal protein uL11 family. As to quaternary structure, part of the ribosomal stalk of the 50S ribosomal subunit. Interacts with L10 and the large rRNA to form the base of the stalk. L10 forms an elongated spine to which L12 dimers bind in a sequential fashion forming a multimeric L10(L12)X complex. One or more lysine residues are methylated.

Forms part of the ribosomal stalk which helps the ribosome interact with GTP-bound translation factors. This is Large ribosomal subunit protein uL11 from Acidiphilium cryptum (strain JF-5).